The primary structure comprises 149 residues: Protein SprT-like (149 aa).

In terms of domain architecture, SprT-like spans 4–143 (TDYVKQVSLE…CGLCRGKLLL (140 aa)). Residue histidine 64 coordinates Zn(2+). The active site involves glutamate 65. Residue histidine 68 coordinates Zn(2+).

It belongs to the SprT family. Zn(2+) is required as a cofactor.

The protein localises to the cytoplasm. This is Protein SprT-like from Streptococcus pneumoniae (strain JJA).